The chain runs to 318 residues: Ornithine carbamoyltransferase (318 aa).

Carbamoyl phosphate contacts are provided by residues 63-66 (STRT), Gln90, Arg114, and 141-144 (HPCQ). Residues Asn172, Asp235, and 239–240 (SM) each bind L-ornithine. Carbamoyl phosphate contacts are provided by residues 275 to 276 (CL) and Arg303.

It belongs to the aspartate/ornithine carbamoyltransferase superfamily. OTCase family.

Its subcellular location is the cytoplasm. The enzyme catalyses carbamoyl phosphate + L-ornithine = L-citrulline + phosphate + H(+). Its pathway is amino-acid biosynthesis; L-arginine biosynthesis; L-arginine from L-ornithine and carbamoyl phosphate: step 1/3. Reversibly catalyzes the transfer of the carbamoyl group from carbamoyl phosphate (CP) to the N(epsilon) atom of ornithine (ORN) to produce L-citrulline. The chain is Ornithine carbamoyltransferase from Prochlorococcus marinus (strain MIT 9313).